The primary structure comprises 175 residues: Regenerating islet-derived protein 3-alpha (175 aa).

A signal peptide spans 1–26; that stretch reads MLPHLVLNSISWMLLSCLLFVFQVQG. A propeptide spanning residues 27-37 is cleaved from the precursor; the sequence is EDFQKEVPSPR. Cystine bridges form between cysteine 40–cysteine 51, cysteine 68–cysteine 171, and cysteine 146–cysteine 163. One can recognise a C-type lectin domain in the interval 47 to 172; sequence YRSHCYALVM…CDGTLPFVCK (126 aa). Zn(2+) is bound by residues histidine 50, histidine 107, glutamate 121, and histidine 145. Positions 103 to 118 are sufficient to activate EXTL3; that stretch reads WIGLHDPTMGQQPNGG.

In terms of assembly, forms a hexameric membrane-permeabilizing oligomeric pore on membrane phospholipids. The hexamer is formed by three dimers related by helical symmetry. Forms filaments, filamentation traps pore complexes and limits damage to host cells. Interacts with EXTL3. Proteolytic processing by trypsin removes an inhibitory N-terminal propeptide and is essential for peptidoglycan binding and antibacterial activity. Small intestine and pancreas.

The protein resides in the secreted. Functionally, bactericidal C-type lectin. The lack of the EPN motif may explain its inability to bind peptidoglycan. In terms of biological role, acts as a hormone in response to different stimuli like anti-inflammatory signals, such as IL17A, or gut microbiome. Secreted by different cell types to activate its receptor EXTL3 and induce cell specific signaling pathways. Induced by IL17A in keratinocytes, regulates keratinocyte proliferation and differentiation after skin injury via activation of EXTL3-PI3K-AKT signaling pathway. In parallel, inhibits skin inflammation through the inhibition of inflammatory cytokines such as IL6 and TNF. In pancreas, is able to permealize beta-cells membrane and stimulate their proliferation. This chain is Regenerating islet-derived protein 3-alpha (Reg3a), found in Mus musculus (Mouse).